Consider the following 364-residue polypeptide: Anhydro-N-acetylmuramic acid kinase (364 aa).

Position 11–18 (11–18) interacts with ATP; that stretch reads GSSLDGID.

The protein belongs to the anhydro-N-acetylmuramic acid kinase family.

It catalyses the reaction 1,6-anhydro-N-acetyl-beta-muramate + ATP + H2O = N-acetyl-D-muramate 6-phosphate + ADP + H(+). It participates in amino-sugar metabolism; 1,6-anhydro-N-acetylmuramate degradation. The protein operates within cell wall biogenesis; peptidoglycan recycling. Its function is as follows. Catalyzes the specific phosphorylation of 1,6-anhydro-N-acetylmuramic acid (anhMurNAc) with the simultaneous cleavage of the 1,6-anhydro ring, generating MurNAc-6-P. Is required for the utilization of anhMurNAc either imported from the medium or derived from its own cell wall murein, and thus plays a role in cell wall recycling. The protein is Anhydro-N-acetylmuramic acid kinase of Pseudomonas syringae pv. syringae (strain B728a).